The chain runs to 254 residues: Geranylgeranylglyceryl phosphate synthase (254 aa).

2 residues coordinate Mg(2+): Asp-28 and Ser-53. Sn-glycerol 1-phosphate contacts are provided by residues 172 to 178 (YLEAGSG), 203 to 204 (GG), and 225 to 226 (GT).

The protein belongs to the GGGP/HepGP synthase family. Group II subfamily. Requires Mg(2+) as cofactor.

The protein resides in the cytoplasm. It carries out the reaction sn-glycerol 1-phosphate + (2E,6E,10E)-geranylgeranyl diphosphate = sn-3-O-(geranylgeranyl)glycerol 1-phosphate + diphosphate. Its pathway is membrane lipid metabolism; glycerophospholipid metabolism. Prenyltransferase that catalyzes the transfer of the geranylgeranyl moiety of geranylgeranyl diphosphate (GGPP) to the C3 hydroxyl of sn-glycerol-1-phosphate (G1P). This reaction is the first ether-bond-formation step in the biosynthesis of archaeal membrane lipids. This Methanococcus vannielii (strain ATCC 35089 / DSM 1224 / JCM 13029 / OCM 148 / SB) protein is Geranylgeranylglyceryl phosphate synthase.